The sequence spans 431 residues: E3 ubiquitin-protein ligase RNF128 (431 aa).

Positions 1–38 (MGQLPGAGVFCRGGCGFSRLLAWCFLLVLSPQTPGSRG) are cleaved as a signal peptide. N-linked (GlcNAc...) asparagine glycosylation is found at Asn48, Asn59, and Asn101. The 112-residue stretch at 75-186 (SPLEPVAGVL…LKGTKILQSI (112 aa)) folds into the PA domain. A helical transmembrane segment spans residues 211–231 (IFFVSVSFFIITAATVGYFIF). The segment at 280 to 321 (CAVCIELYKPNDLVRILTCNHVFHKTCVDPWLLEHRTCPMCK) adopts an RING-type; atypical zinc-finger fold. Residues 345 to 354 (VSNETSSNAS) show a composition bias toward polar residues. The segment at 345–431 (VSNETSSNAS…QETTVREIKS (87 aa)) is disordered.

Auto-ubiquitinated. Controls the development of T-cell clonal anergy by ubiquitination.

Its subcellular location is the cytoplasm. It localises to the endomembrane system. It is found in the cytoskeleton. The protein localises to the perinuclear region. It carries out the reaction S-ubiquitinyl-[E2 ubiquitin-conjugating enzyme]-L-cysteine + [acceptor protein]-L-lysine = [E2 ubiquitin-conjugating enzyme]-L-cysteine + N(6)-ubiquitinyl-[acceptor protein]-L-lysine.. It functions in the pathway protein modification; protein ubiquitination. E3 ubiquitin-protein ligase that catalyzes 'Lys-27', 'Lys-48'- or 'Lys-63'-linked polyubiquitin chains formation and plays a role in different biological processes such as modulation of immune response, cytoskeletal dynamics or protein homeostasis. Inhibits IL2 and IL4 transcription, thereby playing an important role in the induction of the anergic phenotype, a long-term stable state of T-lymphocyte unresponsiveness to antigenic stimulation associated with the blockade of interleukin production. Ubiquitinates ARPC5 with 'Lys-48' linkages and COR1A with 'Lys-63' linkages leading to their degradation, down-regulation of these cytoskeletal components results in impaired lamellipodium formation and reduced accumulation of F-actin at the immunological synapse. Functions in the patterning of the dorsal ectoderm; sensitizes ectoderm to respond to neural-inducing signals. Plays a positive role in innate immune response by promoting 'Lys-63'-linked ubiquitination of TBK1 after RNA- or DNA-virus infection. Regulates alveolar macrophage activation and neutrophil infiltration by interacting with TLR4, targeting it for degradation, and inhibiting NF-kappa-B activation, hence decreasing pro-inflammatory cytokines. Negatively regulates the IL-3/STAT5 signaling pathway by facilitating 'Lys-27'-linked polyubiquitination of IL3RA leading to its degradation via lysosomal pathway. Directly regulates the N-glycosylation process in the endoplasmic reticulum by targeting the glycosyl-transferase RPN1 for ubiquitination and degradation. Other substrates targeted for degradation by RNF128 include transmembrane proteins CD40L, CD83 or the tetraspanin CD151. This Bos taurus (Bovine) protein is E3 ubiquitin-protein ligase RNF128 (RNF128).